The sequence spans 357 residues: GTPase Obg (357 aa).

The region spanning 1–159 (MKFVDEAEIQ…RTLKLELKLL (159 aa)) is the Obg domain. The region spanning 160-343 (ADIGMLGFPN…IMKSAMTLFE (184 aa)) is the OBG-type G domain. Residues 166-173 (GFPNVGKS), 191-195 (FTTLY), 213-216 (DVPG), 293-296 (NKAD), and 324-326 (SAV) contribute to the GTP site. Residues serine 173 and threonine 193 each contribute to the Mg(2+) site.

Belongs to the TRAFAC class OBG-HflX-like GTPase superfamily. OBG GTPase family. As to quaternary structure, monomer. Mg(2+) serves as cofactor.

The protein resides in the cytoplasm. Its function is as follows. An essential GTPase which binds GTP, GDP and possibly (p)ppGpp with moderate affinity, with high nucleotide exchange rates and a fairly low GTP hydrolysis rate. Plays a role in control of the cell cycle, stress response, ribosome biogenesis and in those bacteria that undergo differentiation, in morphogenesis control. This chain is GTPase Obg, found in Xylella fastidiosa (strain 9a5c).